A 435-amino-acid chain; its full sequence is 5-methylthioadenosine/S-adenosylhomocysteine deaminase (435 aa).

Residues histidine 65 and histidine 67 each coordinate Zn(2+). 3 residues coordinate substrate: glutamate 94, arginine 150, and histidine 189. Histidine 216 contacts Zn(2+). The substrate site is built by glutamate 219 and aspartate 304. Residue aspartate 304 coordinates Zn(2+).

It belongs to the metallo-dependent hydrolases superfamily. MTA/SAH deaminase family. Requires Zn(2+) as cofactor.

The catalysed reaction is S-adenosyl-L-homocysteine + H2O + H(+) = S-inosyl-L-homocysteine + NH4(+). It catalyses the reaction S-methyl-5'-thioadenosine + H2O + H(+) = S-methyl-5'-thioinosine + NH4(+). Catalyzes the deamination of 5-methylthioadenosine and S-adenosyl-L-homocysteine into 5-methylthioinosine and S-inosyl-L-homocysteine, respectively. Is also able to deaminate adenosine. In Bacillus cereus (strain G9842), this protein is 5-methylthioadenosine/S-adenosylhomocysteine deaminase.